We begin with the raw amino-acid sequence, 164 residues long: UPF0304 protein Asuc_0543 (164 aa).

It belongs to the UPF0304 family.

This Actinobacillus succinogenes (strain ATCC 55618 / DSM 22257 / CCUG 43843 / 130Z) protein is UPF0304 protein Asuc_0543.